The sequence spans 698 residues: Polyphosphate kinase (698 aa).

Asn63 contacts ATP. Residues Arg390 and Arg420 each contribute to the Mg(2+) site. His450 functions as the Phosphohistidine intermediate in the catalytic mechanism. Positions 483, 579, and 607 each coordinate ATP.

Belongs to the polyphosphate kinase 1 (PPK1) family. Mg(2+) serves as cofactor. An intermediate of this reaction is the autophosphorylated ppk in which a phosphate is covalently linked to a histidine residue through a N-P bond.

The catalysed reaction is [phosphate](n) + ATP = [phosphate](n+1) + ADP. Functionally, catalyzes the reversible transfer of the terminal phosphate of ATP to form a long-chain polyphosphate (polyP). The chain is Polyphosphate kinase from Xylella fastidiosa (strain 9a5c).